The chain runs to 577 residues: Sulfite reductase [NADPH] hemoprotein beta-component (577 aa).

[4Fe-4S] cluster contacts are provided by C441, C447, C486, and C490. C490 contributes to the siroheme binding site.

This sequence belongs to the nitrite and sulfite reductase 4Fe-4S domain family. Alpha(8)-beta(8). The alpha component is a flavoprotein, the beta component is a hemoprotein. Siroheme serves as cofactor. Requires [4Fe-4S] cluster as cofactor.

It carries out the reaction hydrogen sulfide + 3 NADP(+) + 3 H2O = sulfite + 3 NADPH + 4 H(+). It participates in sulfur metabolism; hydrogen sulfide biosynthesis; hydrogen sulfide from sulfite (NADPH route): step 1/1. Functionally, component of the sulfite reductase complex that catalyzes the 6-electron reduction of sulfite to sulfide. This is one of several activities required for the biosynthesis of L-cysteine from sulfate. The sequence is that of Sulfite reductase [NADPH] hemoprotein beta-component from Pectobacterium atrosepticum (strain SCRI 1043 / ATCC BAA-672) (Erwinia carotovora subsp. atroseptica).